Reading from the N-terminus, the 1370-residue chain is Histidine kinase P4 (1370 aa).

Positions 1-20 (MRNIGVFSVILFSFLAISLK) are cleaved as a signal peptide. A helical transmembrane segment spans residues 799 to 819 (WAFCLYALCIGTALIALISFL). The Histidine kinase domain maps to 852–1072 (NISHEFRTPL…IFRVSLPLGR (221 aa)). H855 carries the phosphohistidine; by autocatalysis modification. The Response regulatory domain maps to 1119–1234 (TILIVEDHKP…EFRLRIKNIL (116 aa)). D1167 is modified (4-aspartylphosphate). In terms of domain architecture, HTH araC/xylS-type spans 1266–1365 (KKAFKIVEDN…NETPSQYQNR (100 aa)). 2 DNA-binding regions (H-T-H motif) span residues 1284 to 1305 (LAFS…KAWT) and 1332 to 1355 (ISQI…QKKF).

In terms of processing, autophosphorylated. Activation requires a sequential transfer of a phosphate group from a His in the primary transmitter domain, to an Asp in the receiver domain and to a His in the secondary transmitter domain.

Its subcellular location is the membrane. It is found in the cell surface. It carries out the reaction ATP + protein L-histidine = ADP + protein N-phospho-L-histidine.. Histidine kinase probably involved in ulvan degradation. Ulvan is the main polysaccharide component of the Ulvales (green seaweed) cell wall. It is composed of disaccharide building blocks comprising 3-sulfated rhamnose (Rha3S) linked to D-glucuronic acid (GlcA), L-iduronic acid (IduA), or D-xylose (Xyl). This is Histidine kinase P4 from Formosa agariphila (strain DSM 15362 / KCTC 12365 / LMG 23005 / KMM 3901 / M-2Alg 35-1).